We begin with the raw amino-acid sequence, 224 residues long: ATP-dependent dethiobiotin synthetase BioD (224 aa).

12–17 (GVGKTF) lines the ATP pocket. T16 provides a ligand contact to Mg(2+). K37 is an active-site residue. T41 is a binding site for substrate. Residues N52, 107–110 (EGAG), 167–168 (GS), 197–199 (PEG), and E204 each bind ATP. Residues N52 and E107 each contribute to the Mg(2+) site.

It belongs to the dethiobiotin synthetase family. As to quaternary structure, homodimer. Requires Mg(2+) as cofactor.

The protein resides in the cytoplasm. It carries out the reaction (7R,8S)-7,8-diammoniononanoate + CO2 + ATP = (4R,5S)-dethiobiotin + ADP + phosphate + 3 H(+). Its pathway is cofactor biosynthesis; biotin biosynthesis; biotin from 7,8-diaminononanoate: step 1/2. In terms of biological role, catalyzes a mechanistically unusual reaction, the ATP-dependent insertion of CO2 between the N7 and N8 nitrogen atoms of 7,8-diaminopelargonic acid (DAPA, also called 7,8-diammoniononanoate) to form a ureido ring. In Corynebacterium glutamicum (strain ATCC 13032 / DSM 20300 / JCM 1318 / BCRC 11384 / CCUG 27702 / LMG 3730 / NBRC 12168 / NCIMB 10025 / NRRL B-2784 / 534), this protein is ATP-dependent dethiobiotin synthetase BioD.